The primary structure comprises 133 residues: Male-specific protein scotti (133 aa).

The disordered stretch occupies residues 11–57 (FPSNGLGNNNNDPNQQRGERPRQPHPDLGWILDAPNEPPRNRNPLLY). Residues 14 to 24 (NGLGNNNNDPN) are compositionally biased toward low complexity. The N-linked (GlcNAc...) asparagine glycan is linked to asparagine 83.

It belongs to the male-specific scotti family.

In terms of biological role, post-meiotically transcribed gene that has a role in late spermiogenesis; required for actin cone progression during spermatid individualization. In Drosophila persimilis (Fruit fly), this protein is Male-specific protein scotti.